Here is a 95-residue protein sequence, read N- to C-terminus: Large ribosomal subunit protein bL27 (95 aa).

Positions 1–6 (MKLQLF) are excised as a propeptide. The disordered stretch occupies residues 1 to 25 (MKLQLFAHKKGVGSSRNGRDSESKR).

This sequence belongs to the bacterial ribosomal protein bL27 family. The N-terminus is cleaved by ribosomal processing cysteine protease Prp.

The chain is Large ribosomal subunit protein bL27 from Thermoanaerobacter pseudethanolicus (strain ATCC 33223 / 39E) (Clostridium thermohydrosulfuricum).